The primary structure comprises 660 residues: Iron(3+)-hydroxamate import system permease protein FhuB (660 aa).

The next 18 membrane-spanning stretches (helical) occupy residues 5–25 (IALF…ALTW), 62–82 (LAIS…FQQV), 93–113 (LGVA…AIPG), 118–138 (QFAA…VAWG), 147–167 (ILAG…LVIF), 197–217 (QLLG…LMGL), 240–260 (AIVI…IGLF), 277–297 (LMLA…IILW), 303–323 (MEVS…LWLL), 348–368 (LAFA…ALSF), 391–411 (WPRI…GCII), 424–444 (VLGI…LVPG), 447–467 (FGWL…IIMI), 479–499 (MLLA…MLQA), 528–548 (GIVM…LTIL), 567–587 (IALL…IGPL), 607–627 (MPHI…ADWC), and 635–655 (FQIP…IYLL).

Belongs to the binding-protein-dependent transport system permease family. FecCD subfamily. As to quaternary structure, the complex is composed of two ATP-binding proteins (FhuC), a transmembrane protein (FhuB) and a solute-binding protein (FhuD). FhuB interacts with FhuC. FhuB interacts with FhuD. FhuB binds substrate-loaded FhuD more strongly than FhuD alone.

The protein resides in the cell inner membrane. Part of the ABC transporter complex FhuCDB involved in iron(3+)-hydroxamate import. Responsible for the translocation of the substrate across the membrane. The polypeptide is Iron(3+)-hydroxamate import system permease protein FhuB (fhuB) (Escherichia coli (strain K12)).